The following is an 83-amino-acid chain: Exodeoxyribonuclease 7 small subunit (83 aa).

It belongs to the XseB family. Heterooligomer composed of large and small subunits.

The protein localises to the cytoplasm. It carries out the reaction Exonucleolytic cleavage in either 5'- to 3'- or 3'- to 5'-direction to yield nucleoside 5'-phosphates.. Functionally, bidirectionally degrades single-stranded DNA into large acid-insoluble oligonucleotides, which are then degraded further into small acid-soluble oligonucleotides. In Nitrobacter hamburgensis (strain DSM 10229 / NCIMB 13809 / X14), this protein is Exodeoxyribonuclease 7 small subunit.